Consider the following 164-residue polypeptide: MNSRVPATQSWFSSHLPTTEPDLEPATAAEGSTTETATLSPETTSFNDTRIPDVAGGAAGVGTMLLSFGIITVIGLAVAMVLYIRKKKRLEKLRHQLMPMYNFDPTEEQDELEQELLEHGRDAASMQAAASLQVTQGKSTLPSQGPLQRPSRLVFTDVANAIHA.

The span at M1 to P17 shows a compositional bias: polar residues. The disordered stretch occupies residues M1–D48. Low complexity predominate over residues E24 to S45. A helical membrane pass occupies residues M64–I84. The stretch at T106–A130 forms a coiled coil.

It localises to the membrane. This is an uncharacterized protein from Mus musculus (Mouse).